The sequence spans 506 residues: Lysine--tRNA ligase (506 aa).

Mg(2+) is bound by residues Glu-416 and Glu-423.

It belongs to the class-II aminoacyl-tRNA synthetase family. In terms of assembly, homodimer. Mg(2+) serves as cofactor.

The protein localises to the cytoplasm. It catalyses the reaction tRNA(Lys) + L-lysine + ATP = L-lysyl-tRNA(Lys) + AMP + diphosphate. The sequence is that of Lysine--tRNA ligase from Xylella fastidiosa (strain M23).